We begin with the raw amino-acid sequence, 236 residues long: Uridylate kinase (236 aa).

ATP is bound at residue 12 to 15 (KISG). An involved in allosteric activation by GTP region spans residues 20-25 (GTNGYG). G54 contributes to the UMP binding site. Positions 55 and 59 each coordinate ATP. UMP contacts are provided by residues D72 and 133–140 (TGNPYFST). Residues Y166 and D169 each coordinate ATP.

It belongs to the UMP kinase family. In terms of assembly, homohexamer.

It localises to the cytoplasm. It carries out the reaction UMP + ATP = UDP + ADP. It functions in the pathway pyrimidine metabolism; CTP biosynthesis via de novo pathway; UDP from UMP (UMPK route): step 1/1. Its activity is regulated as follows. Allosterically activated by GTP. Inhibited by UTP. In terms of biological role, catalyzes the reversible phosphorylation of UMP to UDP. The sequence is that of Uridylate kinase from Clostridium acetobutylicum (strain ATCC 824 / DSM 792 / JCM 1419 / IAM 19013 / LMG 5710 / NBRC 13948 / NRRL B-527 / VKM B-1787 / 2291 / W).